The primary structure comprises 556 residues: Peptidylarginine deiminase (556 aa).

The signal sequence occupies residues 1-23 (MKKLLQAKALILALGLFQLPAIA). The propeptide occupies 24 to 43 (QTQMQADRTNGQFATEEMQR). Cys351 (amidino-cysteine intermediate) is an active-site residue.

It belongs to the agmatine deiminase family. FAD is required as a cofactor. FMN serves as cofactor.

Its subcellular location is the secreted. With respect to regulation, inhibited by cysteine and TLCK. Inhibited by high concentration of thiourea and thio-L-citrulline. Its function is as follows. Deiminates the guanidino group of C-terminal arginine residues on a variety of peptides, including the vasoregulatory peptide-hormone bradykinin, to yield ammonia and a citrulline residue. May promote the growth of the pathogen in the periodontal pocket by producing ammonia, ammonia having a protective effect during acidic cleaning cycles in the mouth. In Porphyromonas gingivalis (strain ATCC BAA-308 / W83), this protein is Peptidylarginine deiminase.